A 292-amino-acid chain; its full sequence is 4-hydroxy-tetrahydrodipicolinate synthase (292 aa).

Residue T45 participates in pyruvate binding. The active-site Proton donor/acceptor is Y133. K162 serves as the catalytic Schiff-base intermediate with substrate. I204 lines the pyruvate pocket.

It belongs to the DapA family. Homotetramer; dimer of dimers.

It is found in the cytoplasm. It catalyses the reaction L-aspartate 4-semialdehyde + pyruvate = (2S,4S)-4-hydroxy-2,3,4,5-tetrahydrodipicolinate + H2O + H(+). Its pathway is amino-acid biosynthesis; L-lysine biosynthesis via DAP pathway; (S)-tetrahydrodipicolinate from L-aspartate: step 3/4. In terms of biological role, catalyzes the condensation of (S)-aspartate-beta-semialdehyde [(S)-ASA] and pyruvate to 4-hydroxy-tetrahydrodipicolinate (HTPA). This Oleidesulfovibrio alaskensis (strain ATCC BAA-1058 / DSM 17464 / G20) (Desulfovibrio alaskensis) protein is 4-hydroxy-tetrahydrodipicolinate synthase.